The sequence spans 273 residues: Undecaprenyl-diphosphatase (273 aa).

A run of 7 helical transmembrane segments spans residues Ser6–Ser26, Ala45–Trp65, Leu90–His110, Leu116–Ala136, Tyr190–Leu210, Ala222–Ile242, and Ile252–Phe272.

Belongs to the UppP family.

It is found in the cell inner membrane. The enzyme catalyses di-trans,octa-cis-undecaprenyl diphosphate + H2O = di-trans,octa-cis-undecaprenyl phosphate + phosphate + H(+). Catalyzes the dephosphorylation of undecaprenyl diphosphate (UPP). Confers resistance to bacitracin. The polypeptide is Undecaprenyl-diphosphatase (Salmonella heidelberg (strain SL476)).